The chain runs to 704 residues: ATP-dependent DNA helicase Hel308 (704 aa).

Residues Gln31 and 49–56 (SPTASGKT) contribute to the ATP site. One can recognise a Helicase ATP-binding domain in the interval 36 to 200 (RKGLLDGKRL…WLNAELVATN (165 aa)). The DEAH box signature appears at 148 to 151 (DEFH). The Helicase C-terminal domain maps to 235-439 (AIIAYTLDIV…AFYSFLISII (205 aa)). A binds Hjc region spans residues 366-645 (VVGYMDLIPV…LHARVKDGVK (280 aa)). The segment at 432 to 644 (YSFLISIIAS…ELHARVKDGV (213 aa)) is required for helicase activity. Residues 646–704 (PELIELVKIPGIGRVRARLLYQHDIKKPEDIVLNPEKVKQLLGPNLGEKIVREAARTIA) are inhibits intrinsic ATPase, and helicase.

It belongs to the helicase family. Hel308 subfamily. In terms of assembly, monomer; forms a 1:2 complex with Hjc, which may form a complex with Holliday junction DNA. Requires Mg(2+) as cofactor.

The enzyme catalyses Couples ATP hydrolysis with the unwinding of duplex DNA by translocating in the 3'-5' direction.. The catalysed reaction is ATP + H2O = ADP + phosphate + H(+). It carries out the reaction Couples ATP hydrolysis with the unwinding of duplex DNA at the replication fork by translocating in the 5'-3' direction. This creates two antiparallel DNA single strands (ssDNA). The leading ssDNA polymer is the template for DNA polymerase III holoenzyme which synthesizes a continuous strand.. With respect to regulation, helicase activity is inhibited by Hjc and by PCNA123 and PCNA323. Its function is as follows. An ATP, Mg(2+)-dependent DNA 3'-5' and 5'-3' helicase that may be involved in repair of stalled replication forks. Stimulated by both ss and dsDNA. Unwinds both leading and lagging strands in replication fork structures, unlike orthologs in P.furiosus and M.thermautotrophicus which only unwind the lagging strand and only have 3'-5' helicase activity. Preferentially binds dsDNA with overhangs or branched DNA. Able to anneal DNA substrates that could form a replication fork-like structure, has replication fork reversal activity (at least in vitro). This Sulfurisphaera tokodaii (strain DSM 16993 / JCM 10545 / NBRC 100140 / 7) (Sulfolobus tokodaii) protein is ATP-dependent DNA helicase Hel308.